We begin with the raw amino-acid sequence, 148 residues long: Ribonuclease H (148 aa).

The region spanning 1–141 is the RNase H type-1 domain; sequence MKTVEIYTDG…ADELANLGVK (141 aa). Mg(2+)-binding residues include D9, E47, D69, and D133.

Belongs to the RNase H family. In terms of assembly, monomer. Requires Mg(2+) as cofactor.

It localises to the cytoplasm. It catalyses the reaction Endonucleolytic cleavage to 5'-phosphomonoester.. In terms of biological role, endonuclease that specifically degrades the RNA of RNA-DNA hybrids. This chain is Ribonuclease H, found in Hahella chejuensis (strain KCTC 2396).